A 115-amino-acid polypeptide reads, in one-letter code: Phosphoribosyl-AMP cyclohydrolase (115 aa).

Asp80 contributes to the Mg(2+) binding site. Residue Cys81 coordinates Zn(2+). Mg(2+) contacts are provided by Asp82 and Asp84. Residues Cys97 and Cys104 each contribute to the Zn(2+) site.

Belongs to the PRA-CH family. As to quaternary structure, homodimer. The cofactor is Mg(2+). Requires Zn(2+) as cofactor.

It is found in the cytoplasm. It carries out the reaction 1-(5-phospho-beta-D-ribosyl)-5'-AMP + H2O = 1-(5-phospho-beta-D-ribosyl)-5-[(5-phospho-beta-D-ribosylamino)methylideneamino]imidazole-4-carboxamide. It functions in the pathway amino-acid biosynthesis; L-histidine biosynthesis; L-histidine from 5-phospho-alpha-D-ribose 1-diphosphate: step 3/9. Catalyzes the hydrolysis of the adenine ring of phosphoribosyl-AMP. The sequence is that of Phosphoribosyl-AMP cyclohydrolase from Nocardia farcinica (strain IFM 10152).